The sequence spans 103 residues: Antitoxin VapB1 (103 aa).

Its function is as follows. Antitoxin component of a type II toxin-antitoxin (TA) system. Upon expression in E.coli neutralizes the effect of cognate toxin VapC1, partially inhibits the RNase activity of VapC1 in vitro. In Rickettsia felis (strain ATCC VR-1525 / URRWXCal2) (Rickettsia azadi), this protein is Antitoxin VapB1 (vapB1).